We begin with the raw amino-acid sequence, 236 residues long: C-&gt;U-editing enzyme APOBEC-1 (236 aa).

One can recognise a CMP/dCMP-type deaminase domain in the interval 10–134; sequence GDPTLRRRIE…QQNRQGLRDL (125 aa). His-61 is a Zn(2+) binding site. Glu-63 acts as the Proton donor in catalysis. Residues Cys-93 and Cys-96 each coordinate Zn(2+).

The protein belongs to the cytidine and deoxycytidylate deaminase family. In terms of assembly, homodimer. Interacts with A1CF; form an mRNA editing complex. Interacts with RBM47; form an mRNA editing complex. Found in a complex with CELF2/CUGBP2 and A1CF. Interacts with HNRPAB. Interacts with SYNCRIP. It depends on Zn(2+) as a cofactor. As to expression, expressed exclusively in the small intestine.

It is found in the cytoplasm. The protein localises to the nucleus. The enzyme catalyses a cytidine in mRNA + H2O + H(+) = a uridine in mRNA + NH4(+). It carries out the reaction cytidine(6666) in apoB mRNA + H2O + H(+) = uridine(6666) in apoB mRNA + NH4(+). Functionally, cytidine deaminase catalyzing the cytidine to uridine postranscriptional editing of a variety of mRNAs. Form complexes with cofactors that confer differential editing activity and selectivity. Responsible for the postranscriptional editing of a CAA codon for Gln to a UAA codon for stop in the apolipoprotein B mRNA. Also involved in CGA (Arg) to UGA (Stop) editing in the NF1 mRNA. May also play a role in the epigenetic regulation of gene expression by participating in DNA demethylation. The sequence is that of C-&gt;U-editing enzyme APOBEC-1 from Homo sapiens (Human).